The following is a 245-amino-acid chain: Carbohydrate deacetylase (245 aa).

2 residues coordinate Mg(2+): histidine 59 and histidine 121.

It belongs to the YdjC deacetylase family. As to quaternary structure, homodimer. Mg(2+) is required as a cofactor.

In terms of biological role, probably catalyzes the deacetylation of acetylated carbohydrates an important step in the degradation of oligosaccharides. This is Carbohydrate deacetylase from Clostridium beijerinckii (strain ATCC 51743 / NCIMB 8052) (Clostridium acetobutylicum).